The primary structure comprises 1464 residues: Sister chromatid cohesion protein PDS5 homolog B-B (1464 aa).

The stretch at 383 to 419 is one HEAT repeat; it reads LLVNDQLLNFVRERTLDKRWRVRKEAMMGLAQIYKKY. Residues 1126 to 1464 are disordered; the sequence is KSTNVLGAVN…MKSELEGPLL (339 aa). Polar residues predominate over residues 1137-1155; that stretch reads PLSSAGKQMQSKSSRMETV. Residues 1156–1168 are compositionally biased toward low complexity; the sequence is SNASSGSNPSSPG. Residues 1177 to 1186 show a composition bias toward acidic residues; that stretch reads TELDQIEYED. Basic and acidic residues-rich tracts occupy residues 1197–1215, 1234–1244, and 1265–1274; these read KKSD…VEKP, ELSKPAQEPKS, and WQEKRLKEDL. Residues 1286 to 1295 are compositionally biased toward basic residues; that stretch reads KKGRRGRPPK. A DNA-binding region (a.T hook 1) is located at residues 1287 to 1299; it reads KGRRGRPPKSAKM. The segment covering 1325–1342 has biased composition (acidic residues); it reads PTDEEDHLEISEEQDSEN. A compositionally biased stretch (basic residues) spans 1347–1357; the sequence is RKGRGSSKKTP. The span at 1359–1373 shows a compositional bias: polar residues; sequence KSDSTDSALDTSRPT. DNA-binding regions (a.T hook) lie at residues 1375 to 1387 and 1391 to 1403; these read QKRR…TPTV and KSHV…VVSK. Basic residues predominate over residues 1390–1400; it reads KKSHVGRPRKV. A compositionally biased stretch (acidic residues) spans 1425–1435; that stretch reads SNEEETADEEV. Residues 1441–1453 are compositionally biased toward basic residues; it reads GRRRTAKKRRWIQ. Over residues 1455-1464 the composition is skewed to basic and acidic residues; that stretch reads MKSELEGPLL.

This sequence belongs to the PDS5 family. Interacts with the cohesin complex. Post-translationally, phosphorylated in mitotic cells.

The protein localises to the nucleus. Its function is as follows. Plays a role in androgen-induced proliferative arrest. Required for maintenance of sister chromatid cohesion during mitosis. The chain is Sister chromatid cohesion protein PDS5 homolog B-B (pds5b-b) from Xenopus laevis (African clawed frog).